The chain runs to 250 residues: tRNA (guanine-N(1)-)-methyltransferase (250 aa).

Residues G116 and 136–141 contribute to the S-adenosyl-L-methionine site; that span reads IGDYVL.

Belongs to the RNA methyltransferase TrmD family. In terms of assembly, homodimer.

The protein localises to the cytoplasm. It carries out the reaction guanosine(37) in tRNA + S-adenosyl-L-methionine = N(1)-methylguanosine(37) in tRNA + S-adenosyl-L-homocysteine + H(+). In terms of biological role, specifically methylates guanosine-37 in various tRNAs. The protein is tRNA (guanine-N(1)-)-methyltransferase of Pseudomonas putida (strain W619).